Here is a 209-residue protein sequence, read N- to C-terminus: Thiamine-phosphate synthase (209 aa).

4-amino-2-methyl-5-(diphosphooxymethyl)pyrimidine contacts are provided by residues 36–40 (QYRDK) and Asn68. Residues Asp69 and Asp87 each contribute to the Mg(2+) site. Thr106 is a 4-amino-2-methyl-5-(diphosphooxymethyl)pyrimidine binding site. 133 to 135 (SST) serves as a coordination point for 2-[(2R,5Z)-2-carboxy-4-methylthiazol-5(2H)-ylidene]ethyl phosphate. Lys136 serves as a coordination point for 4-amino-2-methyl-5-(diphosphooxymethyl)pyrimidine. Gly163 lines the 2-[(2R,5Z)-2-carboxy-4-methylthiazol-5(2H)-ylidene]ethyl phosphate pocket.

The protein belongs to the thiamine-phosphate synthase family. It depends on Mg(2+) as a cofactor.

It carries out the reaction 2-[(2R,5Z)-2-carboxy-4-methylthiazol-5(2H)-ylidene]ethyl phosphate + 4-amino-2-methyl-5-(diphosphooxymethyl)pyrimidine + 2 H(+) = thiamine phosphate + CO2 + diphosphate. The enzyme catalyses 2-(2-carboxy-4-methylthiazol-5-yl)ethyl phosphate + 4-amino-2-methyl-5-(diphosphooxymethyl)pyrimidine + 2 H(+) = thiamine phosphate + CO2 + diphosphate. The catalysed reaction is 4-methyl-5-(2-phosphooxyethyl)-thiazole + 4-amino-2-methyl-5-(diphosphooxymethyl)pyrimidine + H(+) = thiamine phosphate + diphosphate. Its pathway is cofactor biosynthesis; thiamine diphosphate biosynthesis; thiamine phosphate from 4-amino-2-methyl-5-diphosphomethylpyrimidine and 4-methyl-5-(2-phosphoethyl)-thiazole: step 1/1. Functionally, condenses 4-methyl-5-(beta-hydroxyethyl)thiazole monophosphate (THZ-P) and 2-methyl-4-amino-5-hydroxymethyl pyrimidine pyrophosphate (HMP-PP) to form thiamine monophosphate (TMP). The protein is Thiamine-phosphate synthase of Pseudomonas paraeruginosa (strain DSM 24068 / PA7) (Pseudomonas aeruginosa (strain PA7)).